Here is a 244-residue protein sequence, read N- to C-terminus: Uridylate kinase (244 aa).

15–18 (KLSG) serves as a coordination point for ATP. An involved in allosteric activation by GTP region spans residues 23–28 (GSEGFG). Glycine 57 is a UMP binding site. Residues glycine 58 and arginine 62 each contribute to the ATP site. UMP contacts are provided by residues aspartate 77 and 138–145 (TGNPFFTT). ATP is bound by residues threonine 165, phenylalanine 171, and aspartate 174.

The protein belongs to the UMP kinase family. In terms of assembly, homohexamer.

The protein localises to the cytoplasm. The enzyme catalyses UMP + ATP = UDP + ADP. Its pathway is pyrimidine metabolism; CTP biosynthesis via de novo pathway; UDP from UMP (UMPK route): step 1/1. Its activity is regulated as follows. Allosterically activated by GTP. Inhibited by UTP. Its function is as follows. Catalyzes the reversible phosphorylation of UMP to UDP. In Aeromonas salmonicida (strain A449), this protein is Uridylate kinase.